A 245-amino-acid polypeptide reads, in one-letter code: Enolase-phosphatase E1 (245 aa).

Belongs to the HAD-like hydrolase superfamily. MasA/MtnC family. Monomer. Mg(2+) is required as a cofactor.

It carries out the reaction 5-methylsulfanyl-2,3-dioxopentyl phosphate + H2O = 1,2-dihydroxy-5-(methylsulfanyl)pent-1-en-3-one + phosphate. Its pathway is amino-acid biosynthesis; L-methionine biosynthesis via salvage pathway; L-methionine from S-methyl-5-thio-alpha-D-ribose 1-phosphate: step 3/6. The protein operates within amino-acid biosynthesis; L-methionine biosynthesis via salvage pathway; L-methionine from S-methyl-5-thio-alpha-D-ribose 1-phosphate: step 4/6. Bifunctional enzyme that catalyzes the enolization of 2,3-diketo-5-methylthiopentyl-1-phosphate (DK-MTP-1-P) into the intermediate 2-hydroxy-3-keto-5-methylthiopentenyl-1-phosphate (HK-MTPenyl-1-P), which is then dephosphorylated to form the acireductone 1,2-dihydroxy-3-keto-5-methylthiopentene (DHK-MTPene). This Synechococcus sp. (strain CC9902) protein is Enolase-phosphatase E1.